The following is a 428-amino-acid chain: Enolase (428 aa).

Q164 is a (2R)-2-phosphoglycerate binding site. E208 serves as the catalytic Proton donor. The Mg(2+) site is built by D245, E286, and D313. 4 residues coordinate (2R)-2-phosphoglycerate: K338, R367, S368, and K389. Residue K338 is the Proton acceptor of the active site.

This sequence belongs to the enolase family. Mg(2+) is required as a cofactor.

It is found in the cytoplasm. Its subcellular location is the secreted. The protein resides in the cell surface. It catalyses the reaction (2R)-2-phosphoglycerate = phosphoenolpyruvate + H2O. The protein operates within carbohydrate degradation; glycolysis; pyruvate from D-glyceraldehyde 3-phosphate: step 4/5. In terms of biological role, catalyzes the reversible conversion of 2-phosphoglycerate (2-PG) into phosphoenolpyruvate (PEP). It is essential for the degradation of carbohydrates via glycolysis. This chain is Enolase, found in Pyrococcus horikoshii (strain ATCC 700860 / DSM 12428 / JCM 9974 / NBRC 100139 / OT-3).